The sequence spans 154 residues: Ribonuclease H (154 aa).

The region spanning methionine 1–leucine 142 is the RNase H type-1 domain. Positions 10, 48, 70, and 134 each coordinate Mg(2+).

This sequence belongs to the RNase H family. Monomer. The cofactor is Mg(2+).

The protein resides in the cytoplasm. It catalyses the reaction Endonucleolytic cleavage to 5'-phosphomonoester.. Its function is as follows. Endonuclease that specifically degrades the RNA of RNA-DNA hybrids. The protein is Ribonuclease H of Caulobacter sp. (strain K31).